Consider the following 720-residue polypeptide: Catalase-peroxidase (720 aa).

Residues 82-207 constitute a cross-link (tryptophyl-tyrosyl-methioninium (Trp-Tyr) (with M-233)); the sequence is WHSAGTYRTF…LGNTVMGLIY (126 aa). The active-site Proton acceptor is His-83. Residues 207-233 constitute a cross-link (tryptophyl-tyrosyl-methioninium (Tyr-Met) (with W-82)); the sequence is YVNPEGPNGEPDLEGSAKNIRESFGKM. His-248 is a binding site for heme b.

It belongs to the peroxidase family. Peroxidase/catalase subfamily. As to quaternary structure, homodimer or homotetramer. It depends on heme b as a cofactor. In terms of processing, formation of the three residue Trp-Tyr-Met cross-link is important for the catalase, but not the peroxidase activity of the enzyme.

It catalyses the reaction H2O2 + AH2 = A + 2 H2O. It carries out the reaction 2 H2O2 = O2 + 2 H2O. Its function is as follows. Bifunctional enzyme with both catalase and broad-spectrum peroxidase activity. The polypeptide is Catalase-peroxidase (Halobacterium salinarum (strain ATCC 29341 / DSM 671 / R1)).